The primary structure comprises 96 residues: Large ribosomal subunit protein bL25 (96 aa).

It belongs to the bacterial ribosomal protein bL25 family. Part of the 50S ribosomal subunit; part of the 5S rRNA/L5/L18/L25 subcomplex. Contacts the 5S rRNA. Binds to the 5S rRNA independently of L5 and L18.

This is one of the proteins that binds to the 5S RNA in the ribosome where it forms part of the central protuberance. This is Large ribosomal subunit protein bL25 from Francisella tularensis subsp. tularensis (strain FSC 198).